The sequence spans 371 residues: 4-hydroxy-3-methylbut-2-en-1-yl diphosphate synthase (flavodoxin) (371 aa).

Residues cysteine 270, cysteine 273, cysteine 305, and glutamate 312 each contribute to the [4Fe-4S] cluster site.

Belongs to the IspG family. [4Fe-4S] cluster is required as a cofactor.

It carries out the reaction (2E)-4-hydroxy-3-methylbut-2-enyl diphosphate + oxidized [flavodoxin] + H2O + 2 H(+) = 2-C-methyl-D-erythritol 2,4-cyclic diphosphate + reduced [flavodoxin]. The protein operates within isoprenoid biosynthesis; isopentenyl diphosphate biosynthesis via DXP pathway; isopentenyl diphosphate from 1-deoxy-D-xylulose 5-phosphate: step 5/6. In terms of biological role, converts 2C-methyl-D-erythritol 2,4-cyclodiphosphate (ME-2,4cPP) into 1-hydroxy-2-methyl-2-(E)-butenyl 4-diphosphate. The protein is 4-hydroxy-3-methylbut-2-en-1-yl diphosphate synthase (flavodoxin) of Psychrobacter arcticus (strain DSM 17307 / VKM B-2377 / 273-4).